Reading from the N-terminus, the 193-residue chain is Immunogenic protein MPB70 (193 aa).

An N-terminal signal peptide occupies residues 1–30 (MKVKNTIAATSFAAAGLAALAVAVSPPAAA). Residues 57 to 189 (QDPVAVAASN…ATVYMIDSVL (133 aa)) enclose the FAS1 domain.

In terms of assembly, generally found as a monomer; homodimer in culture fluids.

The protein resides in the secreted. The chain is Immunogenic protein MPB70 (mpb70) from Mycobacterium bovis (strain ATCC BAA-935 / AF2122/97).